The following is a 534-amino-acid chain: GPI transamidase component GPI17 (534 aa).

Residues 1 to 8 (MSNANLRK) are Cytoplasmic-facing. Residues 9-29 (WVGFCFVAIYLFLGVPLWYKL) traverse the membrane as a helical segment. The Lumenal segment spans residues 30 to 472 (TTVYRASLPI…VQQNFFPQEH (443 aa)). N-linked (GlcNAc...) asparagine glycans are attached at residues asparagine 100, asparagine 170, asparagine 228, asparagine 247, and asparagine 299. Residues 473-493 (MIAVYLPLLGPISAVMFFGFY) traverse the membrane as a helical segment. Over 494 to 534 (NVMKEKNQKSKKNGTEREVAKEKLELKEAQKLHAIDGEDEL) the chain is Cytoplasmic.

The protein belongs to the PIGS family. As to quaternary structure, forms a complex with CDC91, GPI16, GPI8 and GAA1. In terms of processing, N-glycosylated.

It is found in the endoplasmic reticulum membrane. It functions in the pathway glycolipid biosynthesis; glycosylphosphatidylinositol-anchor biosynthesis. Its function is as follows. Component of the GPI transamidase complex. Involved in transfer of GPI to proteins. The chain is GPI transamidase component GPI17 (GPI17) from Saccharomyces cerevisiae (strain ATCC 204508 / S288c) (Baker's yeast).